Here is a 401-residue protein sequence, read N- to C-terminus: Chalcone synthase 1 (401 aa).

Cysteine 168 is a catalytic residue.

Belongs to the thiolase-like superfamily. Chalcone/stilbene synthases family.

The enzyme catalyses (E)-4-coumaroyl-CoA + 3 malonyl-CoA + 3 H(+) = 2',4,4',6'-tetrahydroxychalcone + 3 CO2 + 4 CoA. The protein operates within secondary metabolite biosynthesis; flavonoid biosynthesis. Its function is as follows. The primary product of this enzyme is 4,2',4',6'-tetrahydroxychalcone (also termed naringenin-chalcone or chalcone) which can under specific conditions spontaneously isomerize into naringenin. This Sorghum bicolor (Sorghum) protein is Chalcone synthase 1 (CHS1).